The primary structure comprises 395 residues: Elongation factor Tu (395 aa).

The tr-type G domain maps to 10 to 204; that stretch reads KPHVNIGTIG…TVDSYIPEPK (195 aa). The tract at residues 19 to 26 is G1; that stretch reads GHVDHGKT. A GTP-binding site is contributed by 19–26; it reads GHVDHGKT. Threonine 26 is a binding site for Mg(2+). Residues 60–64 are G2; the sequence is GITIN. Residues 81–84 form a G3 region; sequence DAPG. Residues 81–85 and 136–139 each bind GTP; these read DAPGH and NKTD. The G4 stretch occupies residues 136–139; it reads NKTD. Positions 174–176 are G5; the sequence is SAL.

It belongs to the TRAFAC class translation factor GTPase superfamily. Classic translation factor GTPase family. EF-Tu/EF-1A subfamily. As to quaternary structure, monomer.

The protein resides in the cytoplasm. It catalyses the reaction GTP + H2O = GDP + phosphate + H(+). Functionally, GTP hydrolase that promotes the GTP-dependent binding of aminoacyl-tRNA to the A-site of ribosomes during protein biosynthesis. This is Elongation factor Tu from Leuconostoc citreum (strain KM20).